The primary structure comprises 142 residues: Large ribosomal subunit protein uL11 (142 aa).

The protein belongs to the universal ribosomal protein uL11 family. In terms of assembly, part of the ribosomal stalk of the 50S ribosomal subunit. Interacts with L10 and the large rRNA to form the base of the stalk. L10 forms an elongated spine to which L12 dimers bind in a sequential fashion forming a multimeric L10(L12)X complex. One or more lysine residues are methylated.

Its function is as follows. Forms part of the ribosomal stalk which helps the ribosome interact with GTP-bound translation factors. This is Large ribosomal subunit protein uL11 from Nocardioides sp. (strain ATCC BAA-499 / JS614).